Here is a 117-residue protein sequence, read N- to C-terminus: Fluoride-specific ion channel FluC 2 (117 aa).

2 consecutive transmembrane segments (helical) span residues methionine 1–isoleucine 21 and phenylalanine 46–valine 66. Glycine 71 and threonine 74 together coordinate Na(+). A helical transmembrane segment spans residues leucine 95–tyrosine 115.

The protein belongs to the fluoride channel Fluc/FEX (TC 1.A.43) family.

It is found in the cell membrane. The enzyme catalyses fluoride(in) = fluoride(out). Its activity is regulated as follows. Na(+) is not transported, but it plays an essential structural role and its presence is essential for fluoride channel function. Its function is as follows. Fluoride-specific ion channel. Important for reducing fluoride concentration in the cell, thus reducing its toxicity. This chain is Fluoride-specific ion channel FluC 2, found in Staphylococcus aureus (strain MRSA252).